The chain runs to 1412 residues: MPN domain-containing protein CG4751 (1412 aa).

Residues Met1–Asp10 are compositionally biased toward basic and acidic residues. The segment at Met1 to Gly123 is disordered. 2 stretches are compositionally biased toward acidic residues: residues Gly23 to Gly35 and Ser103 to Thr114. One can recognise an RAMA domain in the interval Glu113–Cys219. In terms of domain architecture, MPN spans Ile284 to Ile420. Residues His361, His363, and Asp374 each contribute to the Zn(2+) site. Disordered stretches follow at residues Ile554 to Ser589, Ser669 to Arg734, Gly853 to Lys891, Ser1027 to Gln1066, Met1271 to Gly1318, Ser1330 to Val1376, and Leu1389 to Asp1412. Residues Ser572 to Leu600 adopt a coiled-coil conformation. Residues Ser699, Ser701, Ser705, Ser719, Ser723, and Ser728 each carry the phosphoserine modification. A compositionally biased stretch (polar residues) spans Pro702–Pro720. 2 stretches are compositionally biased toward low complexity: residues Lys873 to Lys891 and Ser1036 to Gln1066. Residues Lys1275–Ser1290 show a composition bias toward polar residues. Phosphoserine is present on residues Ser1288 and Ser1290. A Phosphothreonine modification is found at Thr1297. Residues Leu1360–Leu1370 are compositionally biased toward low complexity.

It belongs to the peptidase M67 family.

Probable protease. The sequence is that of MPN domain-containing protein CG4751 from Drosophila melanogaster (Fruit fly).